Here is a 914-residue protein sequence, read N- to C-terminus: DENN domain-containing protein 2C (914 aa).

The segment at 46 to 98 (FGVRYNCHQESPPHKRPTGEERNGALPRNTDVKSRDQSEDEGEGGECRGSHPS) is disordered. Over residues 56-68 (SPPHKRPTGEERN) the composition is skewed to basic and acidic residues. A Phosphoserine modification is found at Ser-261. Residues 411–446 (GKKRVKLQPYTGKEAPSSKGETSGNESDAEYLPKNR) are disordered. Residues 480-627 (ELFVVVSLQK…PFPAPGRTIT (148 aa)) form the uDENN domain. The 134-residue stretch at 649 to 782 (RLEHVDFECL…LQAALVQILE (134 aa)) folds into the cDENN domain. The 91-residue stretch at 784-874 (RDEVLAQEQQ…QDRELRQSGV (91 aa)) folds into the dDENN domain.

Functionally, guanine nucleotide exchange factor (GEF) which may activate RAB9A and RAB9B. Promotes the exchange of GDP to GTP, converting inactive GDP-bound Rab proteins into their active GTP-bound form. In Mus musculus (Mouse), this protein is DENN domain-containing protein 2C (Dennd2c).